A 227-amino-acid chain; its full sequence is Esterase OVCA2 (227 aa).

Catalysis depends on charge relay system residues serine 120, aspartate 180, and histidine 207.

Belongs to the LovG family.

It carries out the reaction a carboxylic ester + H2O = an alcohol + a carboxylate + H(+). In terms of biological role, exhibits ester hydrolase activity with a strong preference for long-chain alkyl ester substrates and high selectivity against a variety of short, branched, and substituted esters. Is able to hydrolyze ester bonds within a wide range of p-nitrophenyl derivatives (C2-C14) in vitro, with a strong preference toward substrates of &gt;8 carbons. The polypeptide is Esterase OVCA2 (ovca2) (Danio rerio (Zebrafish)).